Here is a 369-residue protein sequence, read N- to C-terminus: Deoxyhypusine synthase (369 aa).

NAD(+)-binding positions include 105–109, 131–133, Glu137, and Asp238; these read SNLIS and TAG. 136-137 is a binding site for spermidine; sequence EE. Residue Asp243 coordinates spermidine. Gly283 is an NAD(+) binding site. His288 contacts spermidine. An NAD(+)-binding site is contributed by 308–309; sequence TA. Residues 314–316 and 323–329 contribute to the spermidine site; these read GSD and EAVSWGK. Residue Lys329 is the Nucleophile of the active site. 342–343 contacts NAD(+); that stretch reads DA.

Belongs to the deoxyhypusine synthase family. NAD(+) serves as cofactor.

The enzyme catalyses [eIF5A protein]-L-lysine + spermidine = [eIF5A protein]-deoxyhypusine + propane-1,3-diamine. It functions in the pathway protein modification; eIF5A hypusination. Catalyzes the NAD-dependent oxidative cleavage of spermidine and the subsequent transfer of the butylamine moiety of spermidine to the epsilon-amino group of a critical lysine residue of the eIF-5A precursor protein to form the intermediate deoxyhypusine residue. This is the first step of the post-translational modification of that lysine into an unusual amino acid residue named hypusine. Hypusination is unique to mature eIF-5A factor and is essential for its function. The sequence is that of Deoxyhypusine synthase (Dhps) from Mus musculus (Mouse).